Here is a 336-residue protein sequence, read N- to C-terminus: Putative bifunctional cytochrome c-type biogenesis protein CcmAE (336 aa).

The cytochrome c biogenesis ATP-binding export protein CcmA 2 stretch occupies residues 1–199 (MLEARDLYCE…ADTVRRLALT (199 aa)). In terms of domain architecture, ABC transporter spans 2-242 (LEARDLYCER…VGQRLRVGGM (241 aa)). 34–41 (GGNGAGKT) contacts ATP. Residues 196–336 (LALTTALVLY…PQRVDKDTSS (141 aa)) are cytochrome c-type biogenesis protein CcmE 2. 2 residues coordinate heme: histidine 307 and tyrosine 311. The disordered stretch occupies residues 307 to 336 (HDENYTPPEVEKAMQENHRRPQRVDKDTSS).

It in the N-terminal section; belongs to the ABC transporter superfamily. CcmA exporter (TC 3.A.1.107) family. The protein in the C-terminal section; belongs to the CcmE/CycJ family.

It localises to the cell inner membrane. The catalysed reaction is heme b(in) + ATP + H2O = heme b(out) + ADP + phosphate + H(+). Functionally, part of the ABC transporter complex CcmAB involved in the biogenesis of c-type cytochromes; once thought to export heme, this seems not to be the case, but its exact role is uncertain. Responsible for energy coupling to the transport system. In terms of biological role, heme chaperone required for the biogenesis of c-type cytochromes. Transiently binds heme delivered by CcmC and transfers the heme to apo-cytochromes in a process facilitated by CcmF and CcmH. The polypeptide is Putative bifunctional cytochrome c-type biogenesis protein CcmAE (ccmAE) (Salmonella choleraesuis (strain SC-B67)).